The primary structure comprises 738 residues: Squalene hopane cyclase afumA (738 aa).

PFTB repeat units follow at residues Gly132 to Gly173 and Arg321 to Asp361. The active-site Proton donor is Asp460. 3 PFTB repeats span residues Val482–Cys523, Cys581–Lys621, and Ala634–Ala675.

This sequence belongs to the terpene cyclase/mutase family.

Its pathway is secondary metabolite biosynthesis. Functionally, squalene hopane cyclase; part of the gene cluster that mediates the biosynthesis fumihopaside A, a hopane-type glucoside that enhances the thermotolerance and UV resistance of N.fumigata. The first step of fumihopaside A biosynthesis is performed by the squalene hopane cyclase afumA that catalyzes the cyclization of 3S-oxidosqualene into the hopene 21-beta-H-hopane-3-beta,22-diol. The cytochrome P450 monooxygenase afumB is responsible for both hydroxylation at C-24 and oxidations at C-30 of the afumA product. The glycosyltransferase afumC then catalyzes the glycosylation at C-24, using UDP-D-glucose as a donor, to produce fumihopaside A. AfumC is also able to accept UDP-D-galactose and UDP-D-glucuronic acid as donors to yield minor derivatives. Fumihopaside B, another minor derivative produced, is different from fumihopaside A due to the presence of a double bond between C-22 and C-29. The polypeptide is Squalene hopane cyclase afumA (Aspergillus fumigatus (strain CBS 144.89 / FGSC A1163 / CEA10) (Neosartorya fumigata)).